Consider the following 203-residue polypeptide: Large ribosomal subunit protein uL18 (203 aa).

The protein belongs to the universal ribosomal protein uL18 family. Part of the 50S ribosomal subunit. Contacts the 5S and 23S rRNAs.

Its function is as follows. This is one of the proteins that bind and probably mediate the attachment of the 5S RNA into the large ribosomal subunit, where it forms part of the central protuberance. The protein is Large ribosomal subunit protein uL18 of Pyrococcus abyssi (strain GE5 / Orsay).